A 103-amino-acid polypeptide reads, in one-letter code: Small ribosomal subunit protein uS10 (103 aa).

Belongs to the universal ribosomal protein uS10 family. As to quaternary structure, part of the 30S ribosomal subunit.

Its function is as follows. Involved in the binding of tRNA to the ribosomes. This is Small ribosomal subunit protein uS10 from Acetivibrio thermocellus (strain ATCC 27405 / DSM 1237 / JCM 9322 / NBRC 103400 / NCIMB 10682 / NRRL B-4536 / VPI 7372) (Clostridium thermocellum).